The chain runs to 242 residues: Lactate utilization protein A 2 (242 aa).

It belongs to the LutA/YkgE family.

In terms of biological role, is involved in L-lactate degradation and allows cells to grow with lactate as the sole carbon source. The polypeptide is Lactate utilization protein A 2 (Bacillus cereus (strain Q1)).